The sequence spans 54 residues: MRFQPLFWVFFIFAMSLLFISEQKPVNFPRRRKLYRHNCFRRRCIPLHSRVPFP.

The signal sequence occupies residues 1 to 23 (MRFQPLFWVFFIFAMSLLFISEQ).

It belongs to the Elabela/Toddler family. In terms of assembly, interacts with APLNR. Expressed in the placenta. Expressed in syncytiotrophoblasts of the placenta labyrinth at 10.5 dpc. Expressed in placental chorionic trophoblasts (at protein level). Expressed in a small population of epiblast cells in the distal half of the embryo at 7 dpc. Expressed in newly formed definitive endoderm cells in the proximal half of the embryo, while it is not present in extra-embryonic endoderm at 7.5 dpc. This expression pattern then changes to the ventral aspect of the developing foregut pocket and the entire hindgut pocket at 8.5 dpc, before becoming restricted to the foregut overlying the heart and the posterior-most hindgut. Not detected in endothelial precursor cells of the yolk sac at 8 dpc. Expressed in extraembryonic tissues as well as in the chorion at 8.25 dpc. Expressed in endometrial stroma of the uterus of pregnant mice at 8.5 dpc. Expressed in the developing heart, caudal neural tube and trophobasts at 9 dpc. Expressed in the chorionic plate of the chorioallantoic placenta at 9 dpc. Expressed in the posterior half of the ventral neural tube at 9.25 dpc. Expressed in trophoblast cells at the periphery of the placenta at 9.5 dpc. Expressed in collecting ducts of the kidney of pregnant mice at 10.5 dpc. Expressed in the epicardium of the developing heart at 11.5 dpc. Expressed weakly in the adult heart. Expressed in endothelial cells and fibroblasts and weakly in cardiomyocytes.

It is found in the secreted. It localises to the extracellular space. In terms of biological role, peptide hormone that functions as endogenous ligand for the G-protein-coupled apelin receptor (APLNR/APJ), that plays a role in the regulation of normal cardiovascular function and fluid homeostasis. Functions as a balanced agonist activating both G(i) protein pathway and beta-arrestin pathway of APLNR. Downstream G proteins activation, apelin can inhibit cAMP production and activate key intracellular effectors such as ERKs. On the other hand, APLNR activation induces beta-arrestin recruitment to the membrane leading to desensitization and internalization of the receptor. Required for mesendodermal differentiation, blood vessels formation and heart morphogenesis during early development and for adult cardiovascular homeostasis. Acts as a motogen by promoting mesendodermal cell migration during gastrulation by binding and activating APLNR. Acts as an early embryonic regulator of cellular movement with a role in migration and development of cardiac progenitor cells. May act as a chemoattractant for the activation of angioblast migration toward the embryonic midline, i.e. the position of the future vessel formation, during vasculogenesis. Positively regulates sinus venosus (SV)-derived endothelial cells migration into the developing heart to promote coronary blood vessel sprouting. Plays a role in placental vascular development; promotes placental trophoblast invasion and spiral artery remodeling in the uterus. Involved in the regulation of maternal cardiovascular homeostasis to prevent gestational hypertension and for potent cardioprotective functions during heart failure. Mediates myocardial contractility in an ERK1/2-dependent manner. The protein is Apelin receptor early endogenous ligand of Mus musculus (Mouse).